Here is a 364-residue protein sequence, read N- to C-terminus: UDP-N-acetylglucosamine--N-acetylmuramyl-(pentapeptide) pyrophosphoryl-undecaprenol N-acetylglucosamine transferase (364 aa).

Residues 10–12, asparagine 124, serine 195, isoleucine 250, and glutamine 295 each bind UDP-N-acetyl-alpha-D-glucosamine; that span reads TGG.

The protein belongs to the glycosyltransferase 28 family. MurG subfamily.

It is found in the cell membrane. The enzyme catalyses di-trans,octa-cis-undecaprenyl diphospho-N-acetyl-alpha-D-muramoyl-L-alanyl-D-glutamyl-meso-2,6-diaminopimeloyl-D-alanyl-D-alanine + UDP-N-acetyl-alpha-D-glucosamine = di-trans,octa-cis-undecaprenyl diphospho-[N-acetyl-alpha-D-glucosaminyl-(1-&gt;4)]-N-acetyl-alpha-D-muramoyl-L-alanyl-D-glutamyl-meso-2,6-diaminopimeloyl-D-alanyl-D-alanine + UDP + H(+). It participates in cell wall biogenesis; peptidoglycan biosynthesis. Its function is as follows. Cell wall formation. Catalyzes the transfer of a GlcNAc subunit on undecaprenyl-pyrophosphoryl-MurNAc-pentapeptide (lipid intermediate I) to form undecaprenyl-pyrophosphoryl-MurNAc-(pentapeptide)GlcNAc (lipid intermediate II). In Bacillus cytotoxicus (strain DSM 22905 / CIP 110041 / 391-98 / NVH 391-98), this protein is UDP-N-acetylglucosamine--N-acetylmuramyl-(pentapeptide) pyrophosphoryl-undecaprenol N-acetylglucosamine transferase.